The following is a 602-amino-acid chain: Probable translation initiation factor IF-2 (602 aa).

In terms of domain architecture, tr-type G spans 9 to 229 (LRQPIVVVLG…GLTQNYMKNK (221 aa)). Positions 18 to 25 (GHVDHGKT) are G1. A GTP-binding site is contributed by 18–25 (GHVDHGKT). Positions 43-47 (EMTQE) are G2. Positions 82–85 (DTPG) are G3. GTP contacts are provided by residues 82-86 (DTPGH) and 136-139 (NKID). Residues 136-139 (NKID) form a G4 region. A G5 region spans residues 204 to 206 (SAK).

The protein belongs to the TRAFAC class translation factor GTPase superfamily. Classic translation factor GTPase family. IF-2 subfamily.

In terms of biological role, function in general translation initiation by promoting the binding of the formylmethionine-tRNA to ribosomes. Seems to function along with eIF-2. This Sulfolobus acidocaldarius (strain ATCC 33909 / DSM 639 / JCM 8929 / NBRC 15157 / NCIMB 11770) protein is Probable translation initiation factor IF-2 (infB).